A 103-amino-acid polypeptide reads, in one-letter code: Co-chaperonin GroES (103 aa).

Belongs to the GroES chaperonin family. Heptamer of 7 subunits arranged in a ring. Interacts with the chaperonin GroEL.

It localises to the plastid. The protein resides in the cyanelle. Together with the chaperonin GroEL, plays an essential role in assisting protein folding. The GroEL-GroES system forms a nano-cage that allows encapsulation of the non-native substrate proteins and provides a physical environment optimized to promote and accelerate protein folding. GroES binds to the apical surface of the GroEL ring, thereby capping the opening of the GroEL channel. The polypeptide is Co-chaperonin GroES (Cyanophora paradoxa).